Here is a 123-residue protein sequence, read N- to C-terminus: Large ribosomal subunit protein bL12 (123 aa).

This sequence belongs to the bacterial ribosomal protein bL12 family. As to quaternary structure, homodimer. Part of the ribosomal stalk of the 50S ribosomal subunit. Forms a multimeric L10(L12)X complex, where L10 forms an elongated spine to which 2 to 4 L12 dimers bind in a sequential fashion. Binds GTP-bound translation factors.

Functionally, forms part of the ribosomal stalk which helps the ribosome interact with GTP-bound translation factors. Is thus essential for accurate translation. This chain is Large ribosomal subunit protein bL12, found in Hydrogenovibrio crunogenus (strain DSM 25203 / XCL-2) (Thiomicrospira crunogena).